The following is a 158-amino-acid chain: Small ribosomal subunit protein uS9 (158 aa).

This sequence belongs to the universal ribosomal protein uS9 family.

The polypeptide is Small ribosomal subunit protein uS9 (Nitrobacter hamburgensis (strain DSM 10229 / NCIMB 13809 / X14)).